The sequence spans 223 residues: Adenylate kinase 4, mitochondrial (223 aa).

Residue 15-20 (GSGKGT) coordinates a ribonucleoside 5'-triphosphate. The NMP stretch occupies residues 35–64 (SSGHLLRENLKTNTEVGDVAKQYLEKGLLV). AMP is bound by residues S36 and R41. The residue at position 60 (K60) is an N6-succinyllysine. Residues 62–64 (LLV), 89–92 (GFPR), and Q96 each bind AMP. Positions 125 to 162 (RRWIHPSSGRVYNLDFNPPQVLGVDDITGEPLVQQEDD) are LID. Residues R126 and 135–136 (VY) each bind a ribonucleoside 5'-triphosphate. An AMP-binding site is contributed by R170. K175 carries the N6-acetyllysine modification. N6-acetyllysine; alternate is present on residues K179 and K186. K179 and K186 each carry N6-succinyllysine; alternate. An a ribonucleoside 5'-triphosphate-binding site is contributed by T199.

This sequence belongs to the adenylate kinase family. AK3 subfamily. Monomer. Interacts with SLC25A5/ANT2. In terms of tissue distribution, expressed in the pyramidal cells in the hippocampus.

The protein localises to the mitochondrion matrix. It catalyses the reaction a ribonucleoside 5'-phosphate + ATP = a ribonucleoside 5'-diphosphate + ADP. It carries out the reaction AMP + ATP = 2 ADP. The catalysed reaction is GTP + AMP = GDP + ADP. The enzyme catalyses CMP + ATP = CDP + ADP. It catalyses the reaction GTP + CMP = CDP + GDP. It carries out the reaction dAMP + ATP = dADP + ADP. The catalysed reaction is dCMP + ATP = dCDP + ADP. The enzyme catalyses a 2'-deoxyribonucleoside 5'-diphosphate + ATP = a 2'-deoxyribonucleoside 5'-triphosphate + ADP. It catalyses the reaction a ribonucleoside 5'-diphosphate + ATP = a ribonucleoside 5'-triphosphate + ADP. It carries out the reaction GDP + ATP = GTP + ADP. The catalysed reaction is CDP + GTP = CTP + GDP. The enzyme catalyses CDP + ATP = CTP + ADP. It catalyses the reaction UDP + ATP = UTP + ADP. It carries out the reaction GTP + UDP = UTP + GDP. The catalysed reaction is dADP + GTP = dATP + GDP. The enzyme catalyses dCDP + GTP = dCTP + GDP. It catalyses the reaction dCDP + ATP = dCTP + ADP. It carries out the reaction dGDP + ATP = dGTP + ADP. The catalysed reaction is dTDP + GTP = dTTP + GDP. The enzyme catalyses dTDP + ATP = dTTP + ADP. Broad-specificity mitochondrial nucleoside phosphate kinase involved in cellular nucleotide homeostasis by catalyzing nucleoside-phosphate interconversions. Similar to other adenylate kinases, preferentially catalyzes the phosphorylation of the nucleoside monophosphate AMP with ATP as phosphate donor to produce ADP. Phosphorylates only AMP when using GTP as phosphate donor. In vitro, can also catalyze the phosphorylation of CMP, dAMP and dCMP and use GTP as an alternate phosphate donor. Moreover, exhibits a diphosphate kinase activity, producing ATP, CTP, GTP, UTP, TTP, dATP, dCTP and dGTP from the corresponding diphosphate substrates with either ATP or GTP as phosphate donors. Plays a role in controlling cellular ATP levels by regulating phosphorylation and activation of the energy sensor protein kinase AMPK. Plays a protective role in the cellular response to oxidative stress. This is Adenylate kinase 4, mitochondrial from Rattus norvegicus (Rat).